We begin with the raw amino-acid sequence, 484 residues long: Glycogen synthase (484 aa).

Residue lysine 15 participates in ADP-alpha-D-glucose binding.

The protein belongs to the glycosyltransferase 1 family. Bacterial/plant glycogen synthase subfamily.

The catalysed reaction is [(1-&gt;4)-alpha-D-glucosyl](n) + ADP-alpha-D-glucose = [(1-&gt;4)-alpha-D-glucosyl](n+1) + ADP + H(+). It participates in glycan biosynthesis; glycogen biosynthesis. Functionally, synthesizes alpha-1,4-glucan chains using ADP-glucose. This chain is Glycogen synthase, found in Geotalea daltonii (strain DSM 22248 / JCM 15807 / FRC-32) (Geobacter daltonii).